The following is a 710-amino-acid chain: Bifunctional sesterterpene synthase (710 aa).

A stellata-2,6,19-trien synthase region spans residues 1 to 327 (MEFKFSAVVD…RYYTDASFSE (327 aa)). Positions 92 and 96 each coordinate Mg(2+). Substrate-binding positions include D92, D96, 181–184 (RVHD), and 229–233 (SWDKE). The DDXXD motif 1 signature appears at 92-96 (DDVTD). An NSE motif motif is present at residues 278–286 (YLRVFEEVK). 318–319 (RY) is a binding site for substrate. The tract at residues 328–709 (RQLEWMKNGI…LRLIFELLRN (382 aa)) is geranylgeranyl diphosphate synthase. The segment at 365 to 404 (HHAVTSNGTGTGSHDTLNGDGTAHENNSRDASIPGRTTNG) is disordered. The segment covering 368 to 380 (VTSNGTGTGSHDT) has biased composition (polar residues). K430, R433, and H462 together coordinate isopentenyl diphosphate. D469 and D473 together coordinate Mg(2+). The DDXXD motif 2 signature appears at 469-473 (DDLED). R478 contacts dimethylallyl diphosphate. Isopentenyl diphosphate is bound at residue R479. Dimethylallyl diphosphate contacts are provided by K556, T557, Q592, N599, K609, and K619.

This sequence in the C-terminal section; belongs to the FPP/GGPP synthase family. In the N-terminal section; belongs to the terpene synthase family. Hexamer.

The enzyme catalyses 4 isopentenyl diphosphate + dimethylallyl diphosphate = (2E,6E,10E,14E)-geranylfarnesyl diphosphate + 4 diphosphate. The catalysed reaction is (2E,6E,10E,14E)-geranylfarnesyl diphosphate = variecoladiene + diphosphate. It participates in secondary metabolite biosynthesis; terpenoid biosynthesis. Its function is as follows. Multifunctional sesterterpene synthase; part of the gene cluster that mediates the biosynthesis of the sesterterpene variecolin. The first step in the pathway is performed by the variecoladiene synthase vrcA that possesses both prenyl transferase and terpene cyclase activity, converting isopentenyl diphosphate and dimethylallyl diphosphate into geranylfarnesyl pyrophosphate (GFPP) and then converting GFPP into the tetracyclic variecoladiene. The cytochrome P450 monooxygenase vrcB then catalyzes multiple oxidations at C-5 and C-20 positions to yield variecolin. This Aspergillus aculeatus (strain ATCC 16872 / CBS 172.66 / WB 5094) protein is Bifunctional sesterterpene synthase.